A 633-amino-acid polypeptide reads, in one-letter code: Phosphomethylpyrimidine synthase (633 aa).

Substrate is bound by residues N245, M274, Y303, H339, 359-361 (SRG), 400-403 (DGLR), and E439. H443 is a Zn(2+) binding site. Y466 serves as a coordination point for substrate. Zn(2+) is bound at residue H507. [4Fe-4S] cluster contacts are provided by C587, C590, and C595.

The protein belongs to the ThiC family. As to quaternary structure, homodimer. Requires [4Fe-4S] cluster as cofactor.

The enzyme catalyses 5-amino-1-(5-phospho-beta-D-ribosyl)imidazole + S-adenosyl-L-methionine = 4-amino-2-methyl-5-(phosphooxymethyl)pyrimidine + CO + 5'-deoxyadenosine + formate + L-methionine + 3 H(+). The protein operates within cofactor biosynthesis; thiamine diphosphate biosynthesis. In terms of biological role, catalyzes the synthesis of the hydroxymethylpyrimidine phosphate (HMP-P) moiety of thiamine from aminoimidazole ribotide (AIR) in a radical S-adenosyl-L-methionine (SAM)-dependent reaction. This Neisseria meningitidis serogroup B (strain ATCC BAA-335 / MC58) protein is Phosphomethylpyrimidine synthase.